The following is a 172-amino-acid chain: Bone marrow stromal antigen 2 (172 aa).

Topologically, residues 1-30 (MAPSFYHYLPVPMDEMGGKQGWGSHRQWLG) are cytoplasmic. The chain crosses the membrane as a helical; Signal-anchor for type II membrane protein span at residues 31 to 51 (AAILVVLFGVTLVILTIYFAV). Residues 52-152 (TANSVACRDG…ETSSTVQVNS (101 aa)) lie on the Extracellular side of the membrane. N70 is a glycosylation site (N-linked (GlcNAc...) asparagine). Residues 74–147 (LLQRQLTRTQ…LRIQKETSST (74 aa)) are a coiled coil. An N-linked (GlcNAc...) asparagine; atypical glycan is attached at N94. Residue N97 is glycosylated (N-linked (GlcNAc...) asparagine). A lipid anchor (GPI-anchor amidated serine) is attached at S152. Positions 153 to 172 (GSSMVVSSLLVLKVSLFLLF) are cleaved as a propeptide — removed in mature form.

As to quaternary structure, parallel homodimer; disulfide-linked. May form homotetramers under reducing conditions. Isoform 1 and isoform 2 form homodimers and also heterodimers with each other. Dimerization is essential for its antiviral activity. Interacts (via cytoplasmic domain) with ARHGAP44. Interacts with MMP14 (via C-terminal cytoplasmic tail). Interacts with LILRA4/ILT7. Interacts with RNF115. In naive mice, specifically expressed on type I interferon-producing cells (at protein level).

It localises to the golgi apparatus. It is found in the trans-Golgi network. Its subcellular location is the cell membrane. The protein localises to the late endosome. The protein resides in the membrane raft. It localises to the cytoplasm. It is found in the apical cell membrane. Its function is as follows. IFN-induced antiviral host restriction factor which efficiently blocks the release of diverse mammalian enveloped viruses by directly tethering nascent virions to the membranes of infected cells. Acts as a direct physical tether, holding virions to the cell membrane and linking virions to each other. The tethered virions can be internalized by endocytosis and subsequently degraded or they can remain on the cell surface. In either case, their spread as cell-free virions is restricted. Its target viruses belong to diverse families, including retroviridae: human immunodeficiency virus type 1 (HIV-1), mouse mammary tumor virus (MMTV) and murine leukemia virus (MLV), filoviridae: ebola virus (EBOV), arenaviridae: lassa virus (LASV), and rhabdoviridae: vesicular stomatitis virus (VSV). Can inhibit cell surface proteolytic activity of MMP14 causing decreased activation of MMP15 which results in inhibition of cell growth and migration. Can stimulate signaling by LILRA4/ILT7 and consequently provide negative feedback to the production of IFN by plasmacytoid dendritic cells in response to viral infection. Plays a role in the organization of the subapical actin cytoskeleton in polarized epithelial cells. In Mus musculus (Mouse), this protein is Bone marrow stromal antigen 2 (Bst2).